The following is a 137-amino-acid chain: Large ribosomal subunit protein uL16 (137 aa).

This sequence belongs to the universal ribosomal protein uL16 family. In terms of assembly, part of the 50S ribosomal subunit.

Its function is as follows. Binds 23S rRNA and is also seen to make contacts with the A and possibly P site tRNAs. The polypeptide is Large ribosomal subunit protein uL16 (Leuconostoc citreum (strain KM20)).